The following is a 363-amino-acid chain: UDP-N-acetylglucosamine--N-acetylmuramyl-(pentapeptide) pyrophosphoryl-undecaprenol N-acetylglucosamine transferase (363 aa).

UDP-N-acetyl-alpha-D-glucosamine contacts are provided by residues 10–12 (TGG), asparagine 124, serine 195, isoleucine 248, and glutamine 293.

This sequence belongs to the glycosyltransferase 28 family. MurG subfamily.

Its subcellular location is the cell membrane. It catalyses the reaction Mur2Ac(oyl-L-Ala-gamma-D-Glu-L-Lys-D-Ala-D-Ala)-di-trans,octa-cis-undecaprenyl diphosphate + UDP-N-acetyl-alpha-D-glucosamine = beta-D-GlcNAc-(1-&gt;4)-Mur2Ac(oyl-L-Ala-gamma-D-Glu-L-Lys-D-Ala-D-Ala)-di-trans,octa-cis-undecaprenyl diphosphate + UDP + H(+). The protein operates within cell wall biogenesis; peptidoglycan biosynthesis. Its function is as follows. Cell wall formation. Catalyzes the transfer of a GlcNAc subunit on undecaprenyl-pyrophosphoryl-MurNAc-pentapeptide (lipid intermediate I) to form undecaprenyl-pyrophosphoryl-MurNAc-(pentapeptide)GlcNAc (lipid intermediate II). This chain is UDP-N-acetylglucosamine--N-acetylmuramyl-(pentapeptide) pyrophosphoryl-undecaprenol N-acetylglucosamine transferase, found in Lacticaseibacillus casei (strain BL23) (Lactobacillus casei).